The primary structure comprises 222 residues: Probable translocation protein y4yL (222 aa).

4 helical membrane-spanning segments follow: residues 6–26 (PAILALLAITAALGLLVLAVV), 52–72 (PNIVLYAAALILTMFVSAPVA), 158–178 (IGFLLYLPFIVIDLIVTTILM), and 182–202 (MSMVSPTIIAVPFKLFLFVAI).

It belongs to the FliP/MopC/SpaP family.

The protein localises to the cell membrane. In terms of biological role, could be involved in the secretion of an unknown factor. The sequence is that of Probable translocation protein y4yL from Sinorhizobium fredii (strain NBRC 101917 / NGR234).